The chain runs to 547 residues: Methionine--tRNA ligase (547 aa).

The 'HIGH' region motif lies at 15–25; the sequence is PYANGSLHLGH. Residues cysteine 146, cysteine 149, cysteine 159, and cysteine 162 each coordinate Zn(2+). Residues 332–336 carry the 'KMSKS' region motif; that stretch reads KMSKS. Position 335 (lysine 335) interacts with ATP.

This sequence belongs to the class-I aminoacyl-tRNA synthetase family. MetG type 1 subfamily. As to quaternary structure, monomer. Zn(2+) is required as a cofactor.

The protein localises to the cytoplasm. The enzyme catalyses tRNA(Met) + L-methionine + ATP = L-methionyl-tRNA(Met) + AMP + diphosphate. Is required not only for elongation of protein synthesis but also for the initiation of all mRNA translation through initiator tRNA(fMet) aminoacylation. In Baumannia cicadellinicola subsp. Homalodisca coagulata, this protein is Methionine--tRNA ligase.